Reading from the N-terminus, the 866-residue chain is Potassium voltage-gated channel subfamily KQT member 3 (866 aa).

The segment at 1-42 (MGLKARRPAGAAGGGGDGGGGGGGAANPAGGDAAAAGDEERK) is disordered. Over 1–120 (MGLKARRPAG…IYDALERPRG (120 aa)) the chain is Cytoplasmic. Residues 11 to 25 (AAGGGGDGGGGGGGA) show a composition bias toward gly residues. Over residues 26–36 (ANPAGGDAAAA) the composition is skewed to low complexity. At T81 the chain carries Phosphothreonine. A helical membrane pass occupies residues 121-143 (WALLYHALVFLIVLGCLILAVLT). At 144–153 (TFREYETVSG) the chain is on the extracellular side. Residues 154 to 175 (DWLLLLETFAIFIFGAEFALRI) traverse the membrane as a helical segment. The Cytoplasmic portion of the chain corresponds to 176–193 (WAAGCCCRYKGWRGRLKF). Residues 194–213 (ARKPLCMLDIFVLIASVPVV) form a helical membrane-spanning segment. Over 214–225 (AVGNQGNVLATS) the chain is Extracellular. A helical; Voltage-sensor membrane pass occupies residues 226–244 (LRSLRFLQILRMLRMDRRG). R243 is a binding site for a 1,2-diacyl-sn-glycero-3-phospho-(1D-myo-inositol-4,5-bisphosphate). Topologically, residues 245–256 (GTWKLLGSAICA) are cytoplasmic. The helical transmembrane segment at 257-282 (HSKELITAWYIGFLTLILSSFLVYLV) threads the bilayer. K259 lines the a 1,2-diacyl-sn-glycero-3-phospho-(1D-myo-inositol-4,5-bisphosphate) pocket. At 283–302 (EKDVPEVDAQGEEMKEEFET) the chain is on the extracellular side. Positions 303 to 315 (YADALWWGLITLA) form an intramembrane region, pore-forming. The Selectivity filter signature appears at 316–321 (TIGYGD). At 316–326 (TIGYGDKTPKT) the chain is on the extracellular side. Residues 327-353 (WEGRLIAATFSLIGVSFFALPAGILGS) form a helical membrane-spanning segment. At 354–866 (GLALKVQEQH…SIWTPSGKPT (513 aa)) the chain is on the cytoplasmic side. The tract at residues 356–537 (ALKVQEQHRQ…RLYKKKFKET (182 aa)) is mediates interaction with calmodulin. Residue K366 participates in a 1,2-diacyl-sn-glycero-3-phospho-(1D-myo-inositol-4,5-bisphosphate) binding. Disordered stretches follow at residues 574–617 (PGPP…EDQS), 656–676 (GFSP…EDRR), and 757–866 (QVEL…GKPT). Polar residues predominate over residues 837–866 (EPFTPSGSLPLSSTGDGISDSIWTPSGKPT).

This sequence belongs to the potassium channel family. KQT (TC 1.A.1.15) subfamily. Kv7.3/KCNQ3 sub-subfamily. Heterotetramer with KCNQ2; forms heterotetrameric native M-channel responsible for the M-current. Interacts with calmodulin; the interaction is calcium-independent, constitutive and participates in the proper assembly of a functional M-channel. Heteromultimer with KCNQ5. May associate with KCNE2. Interacts with IQCJ-SCHIP1. Interacts (via the pore module) with SLC5A3/SMIT1; forms a coregulatory complex that alters ion selectivity, voltage dependence and gating kinetics of the channel. Post-translationally, KCNQ2/KCNQ3 are ubiquitinated by NEDD4L. Ubiquitination leads to protein degradation. Degradation induced by NEDD4L is inhibited by USP36.

It localises to the cell membrane. The catalysed reaction is K(+)(in) = K(+)(out). It catalyses the reaction Rb(+)(in) = Rb(+)(out). The enzyme catalyses Cs(+)(in) = Cs(+)(out). It carries out the reaction Na(+)(in) = Na(+)(out). Its activity is regulated as follows. Phosphatidylinositol-4,5-bisphosphate (PIP2) potentiates the activation of KCNQ channels by enhancing the electro-mechanical coupling of the voltage-sensing domain (VSD) and the pore-forming domain (PD). In the closed state of the channel, PIP2 is anchored at the S2-S3 loop; upon channel activation, PIP2 interacts with the S4-S5 linker and is involved in channel gating. Calcium suppresses KCNQ2-KCNQ3 channel currents, with calcium-bound calmodulin inducing a change in channel configuration which leads to the reduction of channel affinity for PIP2 and subsequent current suppression. Its function is as follows. Pore-forming subunit of the voltage-gated potassium (Kv) M-channel which is responsible for the M-current, a key controller of neuronal excitability. M-channel is composed of pore-forming subunits KCNQ2 and KCNQ3 assembled as heterotetramers. The native M-current has a slowly activating and deactivating potassium conductance which plays a critical role in determining the subthreshold electrical excitability of neurons as well as the responsiveness to synaptic inputs. M-channel is selectively permeable in vitro to other cations besides potassium, in decreasing order of affinity K(+) &gt; Rb(+) &gt; Cs(+) &gt; Na(+). M-channel association with SLC5A3/SMIT1 alters channel ion selectivity, increasing Na(+) and Cs(+) permeation relative to K(+). Suppressed by activation of M1 muscarinic acetylcholine receptors. KCNQ3 also associates with KCNQ5 to form a functional channel in vitro and may also contribute to the M-current in brain. The polypeptide is Potassium voltage-gated channel subfamily KQT member 3 (Bos taurus (Bovine)).